The following is a 508-amino-acid chain: GMP synthase [glutamine-hydrolyzing] (508 aa).

Positions 1-189 constitute a Glutamine amidotransferase type-1 domain; that stretch reads MILVLDFGSQ…ALLVCGCEKT (189 aa). Cys-78 functions as the Nucleophile in the catalytic mechanism. Residues His-163 and Glu-165 contribute to the active site. A GMPS ATP-PPase domain is found at 190–383; sequence WGMQHFAQRE…LGVSQDFLMR (194 aa). 217–223 contributes to the ATP binding site; the sequence is SGGVDST.

In terms of assembly, homodimer.

The catalysed reaction is XMP + L-glutamine + ATP + H2O = GMP + L-glutamate + AMP + diphosphate + 2 H(+). It participates in purine metabolism; GMP biosynthesis; GMP from XMP (L-Gln route): step 1/1. Catalyzes the synthesis of GMP from XMP. The sequence is that of GMP synthase [glutamine-hydrolyzing] from Helicobacter pylori (strain P12).